Reading from the N-terminus, the 477-residue chain is Probable cytosolic Fe-S cluster assembly factor GG21400 (477 aa).

Positions 23, 68, 71, 74, 187, 243, 395, and 399 each coordinate [4Fe-4S] cluster.

The protein belongs to the NARF family.

Functionally, component of the cytosolic iron-sulfur (Fe/S) protein assembly machinery. Required for maturation of extramitochondrial Fe/S proteins. This chain is Probable cytosolic Fe-S cluster assembly factor GG21400, found in Drosophila erecta (Fruit fly).